The primary structure comprises 600 residues: FERM domain-containing protein 3 (600 aa).

The 281-residue stretch at 31 to 311 folds into the FERM domain; it reads MRCTIRLLDD…ENQAFYKYAK (281 aa). The interval 413–440 is disordered; the sequence is SAPVLGNSPARGLETTADVTHDEEESIR. Residues 534–554 form a helical membrane-spanning segment; the sequence is LLLAAIGLLMVVLPLLLILLE.

It is found in the membrane. The polypeptide is FERM domain-containing protein 3 (frmd3) (Xenopus tropicalis (Western clawed frog)).